Here is a 1156-residue protein sequence, read N- to C-terminus: Nitric oxide synthase, inducible (1156 aa).

The DINNN-motif; mediates interaction with SPSB1, SPSB2 and SPSB4 signature appears at 23-27 (DINNN). The disordered stretch occupies residues 27–84 (NVGKFYQPPSSPVTQDDPKRHSPGKHGNESPQPLTGTVKTSPESLSKLDAPPSACPRH). Polar residues predominate over residues 55-70 (ESPQPLTGTVKTSPES). Residues Cys110 and Cys115 each contribute to the Zn(2+) site. Position 118 (Ser118) interacts with (6R)-L-erythro-5,6,7,8-tetrahydrobiopterin. Cys200 is a heme b binding site. Residues Gln263, Trp372, Tyr373, and Glu377 each contribute to the L-arginine site. Residues Arg381, Ile462, Trp463, and Phe476 each coordinate (6R)-L-erythro-5,6,7,8-tetrahydrobiopterin. Tyr491 serves as a coordination point for heme b. Residues 515–535 (FKVLVKAVFFASVLMHKAMAS) are calmodulin-binding. Residues 539-677 (ATILFATETG…AFRSWAVQTF (139 aa)) form the Flavodoxin-like domain. FMN-binding residues include Thr545, Glu546, Thr547, Arg549, and Ser550. Position 575 is a phosphotyrosine (Tyr575). FMN contacts are provided by Ser591, Thr592, Ser628, Cys635, Glu661, and Gln665. One can recognise an FAD-binding FR-type domain in the interval 730-970 (KHVFTMRLKS…VRSASGFQLP (241 aa)). Residue Arg750 coordinates NADP(+). FAD-binding residues include His772, Arg906, Tyr908, Ser909, Thr924, and Ala926. An NADP(+)-binding site is contributed by Thr929. Residues Tyr930, Val943, Cys944, and Ser945 each contribute to the FAD site. Residues Thr984, Arg1017, Ser1046, Arg1047, Lys1053, Tyr1055, Gln1057, and Asp1090 each contribute to the NADP(+) site.

This sequence belongs to the NOS family. As to quaternary structure, homodimer. Interacts with NHERF1. Interacts with GAPDH; induced by oxidatively-modified low-densitity lipoprotein (LDL(ox)). Interacts with S100A8 and S100A9 to form the iNOS-S100A8/9 transnitrosylase complex. Interacts with SPSB1, SPSB2 and SPSB4. Interacts with ELOC and CUL5 in the presence of SPSB1 or SPSB2 or SPSB4. Forms a complex with ASL, ASS1 and HSP90AA1; the complex regulates cell-autonomous L-arginine synthesis and citrulline recycling while channeling extracellular L-arginine to nitric oxide synthesis pathway. It depends on heme b as a cofactor. Requires FAD as cofactor. FMN is required as a cofactor. The cofactor is (6R)-L-erythro-5,6,7,8-tetrahydrobiopterin. In terms of processing, polyubiquitinated; mediated by SPSB1, SPSB2 and SPSB4, leading to proteasomal degradation.

Its subcellular location is the cytoplasm. The protein resides in the cytosol. It catalyses the reaction 2 L-arginine + 3 NADPH + 4 O2 + H(+) = 2 L-citrulline + 2 nitric oxide + 3 NADP(+) + 4 H2O. Regulated by calcium/calmodulin. In terms of biological role, produces nitric oxide (NO) which is a messenger molecule with diverse functions throughout the body. In macrophages, NO mediates tumoricidal and bactericidal actions. Also has nitrosylase activity and mediates cysteine S-nitrosylation of cytoplasmic target proteins such PTGS2/COX2. As component of the iNOS-S100A8/9 transnitrosylase complex involved in the selective inflammatory stimulus-dependent S-nitrosylation of GAPDH implicated in regulation of the GAIT complex activity and probably multiple targets including ANXA5, EZR, MSN and VIM. Involved in inflammation, enhances the synthesis of pro-inflammatory mediators such as IL6 and IL8. The polypeptide is Nitric oxide synthase, inducible (NOS2) (Bos taurus (Bovine)).